The following is a 246-amino-acid chain: Exosome complex component Rrp41 (246 aa).

The protein belongs to the RNase PH family. Rrp41 subfamily. In terms of assembly, component of the archaeal exosome complex. Forms a hexameric ring-like arrangement composed of 3 Rrp41-Rrp42 heterodimers. The hexameric ring associates with a trimer of Rrp4 and/or Csl4 subunits.

It localises to the cytoplasm. In terms of biological role, catalytic component of the exosome, which is a complex involved in RNA degradation. Has 3'-&gt;5' exoribonuclease activity. Can also synthesize heteromeric RNA-tails. The protein is Exosome complex component Rrp41 of Pyrobaculum aerophilum (strain ATCC 51768 / DSM 7523 / JCM 9630 / CIP 104966 / NBRC 100827 / IM2).